A 292-amino-acid polypeptide reads, in one-letter code: Ribosomal protein L11 methyltransferase (292 aa).

S-adenosyl-L-methionine is bound by residues T136, G159, D181, and N228.

It belongs to the methyltransferase superfamily. PrmA family.

It is found in the cytoplasm. The enzyme catalyses L-lysyl-[protein] + 3 S-adenosyl-L-methionine = N(6),N(6),N(6)-trimethyl-L-lysyl-[protein] + 3 S-adenosyl-L-homocysteine + 3 H(+). Functionally, methylates ribosomal protein L11. The protein is Ribosomal protein L11 methyltransferase of Rhizobium etli (strain ATCC 51251 / DSM 11541 / JCM 21823 / NBRC 15573 / CFN 42).